The following is a 334-amino-acid chain: Protein-methionine-sulfoxide reductase catalytic subunit MsrP (334 aa).

The tat-type signal signal peptide spans 1–44 (MKKIRPLTEADVTAESAFFMQRRQVLKALGISAAALSLPSTAQA). Mo-molybdopterin-binding positions include asparagine 88, 91 to 92 (YE), cysteine 146, threonine 181, asparagine 233, arginine 238, and 249 to 251 (GIK).

The protein belongs to the MsrP family. As to quaternary structure, heterodimer of a catalytic subunit (MsrP) and a heme-binding subunit (MsrQ). Mo-molybdopterin is required as a cofactor. Post-translationally, predicted to be exported by the Tat system. The position of the signal peptide cleavage has not been experimentally proven.

The protein resides in the periplasm. It catalyses the reaction L-methionyl-[protein] + a quinone + H2O = L-methionyl-(S)-S-oxide-[protein] + a quinol. It carries out the reaction L-methionyl-[protein] + a quinone + H2O = L-methionyl-(R)-S-oxide-[protein] + a quinol. Functionally, part of the MsrPQ system that repairs oxidized periplasmic proteins containing methionine sulfoxide residues (Met-O), using respiratory chain electrons. Thus protects these proteins from oxidative-stress damage caused by reactive species of oxygen and chlorine generated by the host defense mechanisms. MsrPQ is essential for the maintenance of envelope integrity under bleach stress, rescuing a wide series of structurally unrelated periplasmic proteins from methionine oxidation, including the primary periplasmic chaperone SurA and the lipoprotein Pal. The catalytic subunit MsrP is non-stereospecific, being able to reduce both (R-) and (S-) diastereoisomers of methionine sulfoxide. In Salmonella arizonae (strain ATCC BAA-731 / CDC346-86 / RSK2980), this protein is Protein-methionine-sulfoxide reductase catalytic subunit MsrP.